The sequence spans 183 residues: Hypoxanthine-guanine-xanthine phosphoribosyltransferase (183 aa).

GMP is bound by residues 102 to 110, K134, and D163; that span reads EDIIDTGLT. D106 functions as the Proton acceptor in the catalytic mechanism. Residue D163 participates in Mg(2+) binding.

Homodimer. Mg(2+) serves as cofactor.

Its subcellular location is the cytoplasm. The catalysed reaction is IMP + diphosphate = hypoxanthine + 5-phospho-alpha-D-ribose 1-diphosphate. The enzyme catalyses GMP + diphosphate = guanine + 5-phospho-alpha-D-ribose 1-diphosphate. It catalyses the reaction XMP + diphosphate = xanthine + 5-phospho-alpha-D-ribose 1-diphosphate. Its pathway is purine metabolism; GMP biosynthesis via salvage pathway; GMP from guanine: step 1/1. It participates in purine metabolism; IMP biosynthesis via salvage pathway; IMP from hypoxanthine: step 1/1. The protein operates within purine metabolism; XMP biosynthesis via salvage pathway; XMP from xanthine: step 1/1. Functionally, essential in nucleic acid metabolism of T.foetus because the parasite is unable to synthesize purine nucleotides de novo and relies on the HGXPRTase activities for its purine requirements by salvaging purine bases from the host. Works with guanine, hypoxanthine and xanthine. The chain is Hypoxanthine-guanine-xanthine phosphoribosyltransferase (HPT) from Tritrichomonas foetus (Trichomonas foetus).